Reading from the N-terminus, the 955-residue chain is Isoleucine--tRNA ligase (955 aa).

The short motif at 58-68 (IYANGDIHIGH) is the 'HIGH' region element. Glu-552 is a binding site for L-isoleucyl-5'-AMP. The 'KMSKS' region signature appears at 593 to 597 (KMSKS). Lys-596 is an ATP binding site. Residues Cys-918, Cys-921, Cys-938, and Cys-941 each coordinate Zn(2+).

The protein belongs to the class-I aminoacyl-tRNA synthetase family. IleS type 1 subfamily. As to quaternary structure, monomer. Zn(2+) is required as a cofactor.

It is found in the cytoplasm. The enzyme catalyses tRNA(Ile) + L-isoleucine + ATP = L-isoleucyl-tRNA(Ile) + AMP + diphosphate. In terms of biological role, catalyzes the attachment of isoleucine to tRNA(Ile). As IleRS can inadvertently accommodate and process structurally similar amino acids such as valine, to avoid such errors it has two additional distinct tRNA(Ile)-dependent editing activities. One activity is designated as 'pretransfer' editing and involves the hydrolysis of activated Val-AMP. The other activity is designated 'posttransfer' editing and involves deacylation of mischarged Val-tRNA(Ile). The polypeptide is Isoleucine--tRNA ligase (Vesicomyosocius okutanii subsp. Calyptogena okutanii (strain HA)).